We begin with the raw amino-acid sequence, 241 residues long: Leucyl/phenylalanyl-tRNA--protein transferase (241 aa).

Belongs to the L/F-transferase family.

The protein localises to the cytoplasm. It carries out the reaction N-terminal L-lysyl-[protein] + L-leucyl-tRNA(Leu) = N-terminal L-leucyl-L-lysyl-[protein] + tRNA(Leu) + H(+). The catalysed reaction is N-terminal L-arginyl-[protein] + L-leucyl-tRNA(Leu) = N-terminal L-leucyl-L-arginyl-[protein] + tRNA(Leu) + H(+). It catalyses the reaction L-phenylalanyl-tRNA(Phe) + an N-terminal L-alpha-aminoacyl-[protein] = an N-terminal L-phenylalanyl-L-alpha-aminoacyl-[protein] + tRNA(Phe). Functionally, functions in the N-end rule pathway of protein degradation where it conjugates Leu, Phe and, less efficiently, Met from aminoacyl-tRNAs to the N-termini of proteins containing an N-terminal arginine or lysine. This chain is Leucyl/phenylalanyl-tRNA--protein transferase, found in Neisseria meningitidis serogroup C / serotype 2a (strain ATCC 700532 / DSM 15464 / FAM18).